Reading from the N-terminus, the 130-residue chain is Large ribosomal subunit protein bL12 (130 aa).

It belongs to the bacterial ribosomal protein bL12 family. As to quaternary structure, homodimer. Part of the ribosomal stalk of the 50S ribosomal subunit. Forms a multimeric L10(L12)X complex, where L10 forms an elongated spine to which 2 to 4 L12 dimers bind in a sequential fashion. Binds GTP-bound translation factors.

In terms of biological role, forms part of the ribosomal stalk which helps the ribosome interact with GTP-bound translation factors. Is thus essential for accurate translation. This chain is Large ribosomal subunit protein bL12, found in Mycolicibacterium paratuberculosis (strain ATCC BAA-968 / K-10) (Mycobacterium paratuberculosis).